The primary structure comprises 265 residues: Gamma-secretase subunit APH-1A (265 aa).

Topologically, residues 1–2 are lumenal; it reads MG. Residues 3-23 traverse the membrane as a helical segment; sequence AAVFFGCTFVAFGPAFSLFLI. Topologically, residues 24–31 are cytoplasmic; the sequence is TVAGDPLR. A helical membrane pass occupies residues 32–52; it reads VIILVAGAFFWLVSLLLASVV. Over 53-68 the chain is Lumenal; sequence WFILVHVTDRSDARLQ. A helical transmembrane segment spans residues 69 to 89; it reads YGLLIFGAAVSVLLQEVFRFA. Residues 90–118 are Cytoplasmic-facing; sequence YYKLLKKADEGLASLSEDGRSPISIRQMA. The helical transmembrane segment at 119 to 139 threads the bilayer; the sequence is YVSGLSFGIISGVFSVINILA. Residues 140 to 158 lie on the Lumenal side of the membrane; the sequence is DALGPGVVGIHGDSPYYFL. The helical transmembrane segment at 159–179 threads the bilayer; sequence TSAFLTAAIILLHTFWGVVFF. Topologically, residues 180–186 are cytoplasmic; the sequence is DACERRR. A helical membrane pass occupies residues 187 to 207; the sequence is YWALGLVVGSHLLTSGLTFLN. The Lumenal portion of the chain corresponds to 208–213; it reads PWYEAS. Residues 214–234 traverse the membrane as a helical segment; the sequence is LLPIYAVTVSMGLWAFITAGG. The Cytoplasmic segment spans residues 235-265; it reads SLRSIQRSLSCRRQEDSRVMVYSALRIPPED.

This sequence belongs to the APH-1 family. The functional gamma-secretase complex is composed of at least four polypeptides: a presenilin homodimer (PSEN1 or PSEN2), nicastrin (NCSTN), APH1 (APH1A or APH1B) and PSENEN/PEN2.

It localises to the endoplasmic reticulum membrane. Its subcellular location is the golgi apparatus. It is found in the golgi stack membrane. Functionally, non-catalytic subunit of the gamma-secretase complex, an endoprotease complex that catalyzes the intramembrane cleavage of integral membrane proteins such as Notch receptors and APP (amyloid-beta precursor protein). Required for normal gamma-secretase assembly. The gamma-secretase complex plays a role in Notch and Wnt signaling cascades and regulation of downstream processes via its role in processing key regulatory proteins, and by regulating cytosolic CTNNB1 levels. The sequence is that of Gamma-secretase subunit APH-1A (Aph1a) from Mus musculus (Mouse).